We begin with the raw amino-acid sequence, 329 residues long: MSNNAAYLAPQVKTTSTSSKTTFHFAAGLCSGLTSSILLQPADLLKTRVQQSQQTAALLPTLKTILSSPHPIRSLWRGTLPSALRTGFGSALYFTTLNALRQPLAQSAVLTGSNGSANKGTKSSSALPKLSNWANLGTGAVARVAAGFVMMPVTVIKVRYESDYYAYRSLYGAGRDIVRTEGFRGLFSGFGATAARDAPYAGLYVLFYEQLKRHLAGLKHSGTADQPLAATSSSSINFISGGLAAGLATTITNPFDAVKTRLQLMPGKYGNMMRAVKLMIQEDGVRSLFGGLGLRITRKALSSALAWTVYEELILRAEIRWAEKAHAHV.

Solcar repeat units lie at residues 19 to 103 (SKTT…LRQP), 130 to 214 (LSNW…LKRH), and 232 to 316 (SSSS…LILR). A run of 6 helical transmembrane segments spans residues 25 to 50 (FAAG…TRVQ), 78 to 104 (GTLP…RQPL), 136 to 161 (LGTG…VRYE), 189 to 212 (GFGA…EQLK), 236 to 262 (INFI…KTRL), and 291 to 309 (GLGL…AWTV).

It belongs to the mitochondrial carrier (TC 2.A.29) family. SLC25A38 subfamily.

The protein localises to the mitochondrion inner membrane. It catalyses the reaction glycine(in) = glycine(out). Mitochondrial glycine transporter that imports glycine into the mitochondrial matrix. Plays an important role in providing glycine for the first enzymatic step in heme biosynthesis, the condensation of glycine with succinyl-CoA to produce 5-aminolevulinate (ALA) in the mitochondrial matrix. The chain is Mitochondrial glycine transporter from Aspergillus terreus (strain NIH 2624 / FGSC A1156).